Reading from the N-terminus, the 983-residue chain is Anion exchange protein 4 (983 aa).

The segment at 1 to 48 is disordered; that stretch reads MEMKLPGQEGFEASSAPRNIPSGELDSNPDPGTGPSPDGPSDTESKEL. N183 carries N-linked (GlcNAc...) asparagine glycosylation. 2 disordered regions span residues 186 to 205 and 332 to 357; these read TGTR…DNEE and RIPP…RGPA. The next 4 helical transmembrane spans lie at 415 to 435, 443 to 463, 500 to 520, and 530 to 550; these read AVLY…GLLG, GVLE…LMAG, VGIW…SVLV, and GFCA…MLNL. A membrane (anion exchange) region spans residues 415–983; sequence AVLYIYLATV…KAPEINISVN (569 aa). N-linked (GlcNAc...) asparagine glycans are attached at residues N576 and N600. A run of 7 helical transmembrane segments spans residues 624–644, 665–685, 712–732, 758–778, 815–835, 837–857, and 899–919; these read VPDI…FAMA, FSSV…GLAT, PWWW…LIFM, LFCV…WYVS, GLVV…LKFI, MPVL…SIQF, and LWII…LGLV. The span at 946–957 shows a compositional bias: basic and acidic residues; the sequence is RSIPEKGLEPEH. The disordered stretch occupies residues 946-983; that stretch reads RSIPEKGLEPEHSFSGSDSEDSELMYQPKAPEINISVN. N-linked (GlcNAc...) asparagine glycosylation is present at N979.

This sequence belongs to the anion exchanger (TC 2.A.31) family. As to expression, kidney specific.

The protein resides in the basolateral cell membrane. It catalyses the reaction 2 hydrogencarbonate(out) + chloride(in) + Na(+)(out) = 2 hydrogencarbonate(in) + chloride(out) + Na(+)(in). It carries out the reaction K(+)(in) + 2 hydrogencarbonate(in) + chloride(out) = K(+)(out) + 2 hydrogencarbonate(out) + chloride(in). The catalysed reaction is Li(+)(in) + 2 hydrogencarbonate(in) + chloride(out) = Li(+)(out) + 2 hydrogencarbonate(out) + chloride(in). The enzyme catalyses Rb(+)(in) + 2 hydrogencarbonate(in) + chloride(out) = Rb(+)(out) + 2 hydrogencarbonate(out) + chloride(in). It catalyses the reaction Cs(+)(in) + 2 hydrogencarbonate(in) + chloride(out) = Cs(+)(out) + 2 hydrogencarbonate(out) + chloride(in). Electroneutral Cl(-)/HCO3(-) antiporter that favors chloride ion entry and efflux of hydrogencarbonate and sodium ion across the basolateral membrane and may participate in salivary secretion. Also mediates Cl(-)/HCO3(-) exchange activity in the presence of K(+) as well as Cs(+), Li(+), and Rb(+). Does not contribute to Cl(-)/HCO3(-) exchanger in the apical membrane of the upper villous epithelium. The chain is Anion exchange protein 4 from Homo sapiens (Human).